The following is a 119-amino-acid chain: Chorion class CA protein ERA.2 (119 aa).

A signal peptide spans Met-1–Ser-21. The left arm stretch occupies residues Gln-22–Gly-55. The segment at Gly-56–Ile-103 is central domain. The right arm stretch occupies residues Ser-104–Tyr-119.

The protein belongs to the chorion protein family.

In terms of biological role, this protein is one of many from the eggshell of the silk moth. This chain is Chorion class CA protein ERA.2 (ERA.2), found in Bombyx mori (Silk moth).